A 66-amino-acid polypeptide reads, in one-letter code: Large ribosomal subunit protein bL33 (66 aa).

Belongs to the bacterial ribosomal protein bL33 family.

This chain is Large ribosomal subunit protein bL33, found in Wolbachia sp. subsp. Brugia malayi (strain TRS).